The following is an 82-amino-acid chain: Sulfur carrier protein TusA (82 aa).

Cys19 (cysteine persulfide intermediate) is an active-site residue.

Belongs to the sulfur carrier protein TusA family.

The protein resides in the cytoplasm. Sulfur carrier protein which probably makes part of a sulfur-relay system. In Photobacterium profundum (strain SS9), this protein is Sulfur carrier protein TusA.